Here is a 238-residue protein sequence, read N- to C-terminus: Survival of motor neuron-related-splicing factor 30 (238 aa).

Residues 72-132 enclose the Tudor domain; sequence SWKVGDKCMA…KPVEEGRKAK (61 aa). The Nuclear localization signal motif lies at 142–160; the sequence is KKEMIAQQREYKKKKALKK. Phosphoserine is present on serine 201. An N6-acetyllysine modification is found at lysine 219.

It belongs to the SMN family. Associates with spliceosomes. Associates with U4/U5/U6 tri-snRNP and with U2 snRNP.

The protein localises to the nucleus speckle. It is found in the nucleus. It localises to the cajal body. In terms of biological role, involved in spliceosome assembly. The polypeptide is Survival of motor neuron-related-splicing factor 30 (SMNDC1) (Pongo abelii (Sumatran orangutan)).